We begin with the raw amino-acid sequence, 354 residues long: Fructose-bisphosphate aldolase (354 aa).

S50 lines the D-glyceraldehyde 3-phosphate pocket. D83 serves as the catalytic Proton donor. Positions 84, 105, 142, and 198 each coordinate Zn(2+). G199 contacts dihydroxyacetone phosphate. H232 is a Zn(2+) binding site. Residues 233 to 235 (GSS) and 275 to 278 (NIDT) contribute to the dihydroxyacetone phosphate site.

Belongs to the class II fructose-bisphosphate aldolase family. Zn(2+) is required as a cofactor.

It catalyses the reaction beta-D-fructose 1,6-bisphosphate = D-glyceraldehyde 3-phosphate + dihydroxyacetone phosphate. Its pathway is carbohydrate degradation; glycolysis; D-glyceraldehyde 3-phosphate and glycerone phosphate from D-glucose: step 4/4. Catalyzes the aldol condensation of dihydroxyacetone phosphate (DHAP or glycerone-phosphate) with glyceraldehyde 3-phosphate (G3P) to form fructose 1,6-bisphosphate (FBP) in gluconeogenesis and the reverse reaction in glycolysis. This Stutzerimonas stutzeri (Pseudomonas stutzeri) protein is Fructose-bisphosphate aldolase (fba).